The chain runs to 1484 residues: Glutamate receptor ionotropic, NMDA 2B (1484 aa).

An N-terminal signal peptide occupies residues 1-26; it reads MKPRAECCSPKFWLVLAVLAVSGSRA. The Extracellular portion of the chain corresponds to 27-555; sequence RSQKSPPSIG…SPSAFLEPFS (529 aa). Residue N74 is glycosylated (N-linked (GlcNAc...) asparagine). C86 and C321 are oxidised to a cystine. 2 residues coordinate Zn(2+): H127 and E284. N341, N348, N444, and N491 each carry an N-linked (GlcNAc...) asparagine glycan. 2 disulfide bridges follow: C429–C456 and C436–C457. T514 and R519 together coordinate L-glutamate. N542 carries an N-linked (GlcNAc...) asparagine glycan. A helical membrane pass occupies residues 556–576; sequence ADVWVMMFVMLLIVSAVAVFV. At 577–601 the chain is on the cytoplasmic side; the sequence is FEYFSPVGYNRCLADGREPGGPSFT. An intramembrane region (discontinuously helical) is located at residues 602 to 613; sequence IGKAIWLLWGLV. A pore-forming region spans residues 604–623; it reads KAIWLLWGLVFNNSVPVQNP. Residues 614–627 lie on the Cytoplasmic side of the membrane; the sequence is FNNSVPVQNPKGTT. Residues 628–647 form a helical membrane-spanning segment; that stretch reads SKIMVSVWAFFAVIFLASYT. The Extracellular portion of the chain corresponds to 648-819; that stretch reads ANLAAFMIQE…SSQLDIDNMA (172 aa). The N-linked (GlcNAc...) asparagine glycan is linked to N688. L-glutamate-binding positions include 690–691 and D732; that span reads ST. A helical transmembrane segment spans residues 820–835; the sequence is GVFYMLGAAMALSLIT. At 836–1484 the chain is on the cytoplasmic side; it reads FICEHLFYWQ…EKLSSIESDV (649 aa). A phosphoserine mark is found at S882, S886, S917, and S920. Residues Y962 and Y1039 each carry the phosphotyrosine modification. A phosphoserine mark is found at S1058, S1061, and S1064. The disordered stretch occupies residues 1074-1097; it reads EGNAAKRRKQQYKDSLKKRPASAK. Y1109 and Y1133 each carry phosphotyrosine. Position 1143 is a phosphoserine (S1143). Residue Y1155 is modified to Phosphotyrosine. The tract at residues 1161–1194 is disordered; sequence DFKRDSVSGGGPCTNRSHIKHGTGDKHGVVSGVP. Phosphoserine occurs at positions 1255 and 1259. Residues 1271 to 1301 form a disordered region; sequence AVTSNASTTKYPQSPTNSKAQKKNRNKLRRQ. Residues 1272-1289 are compositionally biased toward polar residues; the sequence is VTSNASTTKYPQSPTNSK. The span at 1290 to 1301 shows a compositional bias: basic residues; the sequence is AQKKNRNKLRRQ. Positions 1292–1304 are interaction with DAPK1; sequence KKNRNKLRRQHSY. The residue at position 1303 (S1303) is a Phosphoserine; by DAPK1. Residue Y1474 is modified to Phosphotyrosine. A PDZ-binding motif is present at residues 1482–1484; it reads SDV.

This sequence belongs to the glutamate-gated ion channel (TC 1.A.10.1) family. NR2B/GRIN2B subfamily. As to quaternary structure, heterotetramer. Forms heterotetrameric channels composed of two GluN1/zeta subunits (GRIN1), and two identical GluN2/epsilon subunits (GRIN2A, GRIN2B, GRIN2C or GRIN2D) or GluN3 subunits (GRIN3A or GRIN3B) (in vitro). Can also form heterotetrameric channels that contain at least two GluN1 subunits and at least two different GluN2 subunits (or a combination of one GluN2 and one GluN3 subunits) (in vitro). In vivo, the subunit composition may depend on the expression levels of the different subunits. Found in a complex with GRIN1 and GRIN3B. Found in a complex with GRIN1, GRIN3A and PPP2CB. Interacts with PDZ domains of PATJ, DLG3 and DLG4. Interacts with HIP1 and NETO1. Interacts with MAGI3. Interacts with DAPK1. Found in a complex with GRIN1 and PRR7. Interacts with PRR7. Interacts with CAMK2A. Interacts with ARC; preventing ARC oligomerization. Interacts with TMEM25. Interacts (via the extreme C-terminus) with FRMPD2 (via the second PDZ domain); the interaction is direct and is likely to promote NMDAR-mediated neural signal transmission. Interacts with FAM81A; the interaction facilitates condensate formation via liquid-liquid phase separation. Phosphorylated on tyrosine residues. Phosphorylation at Ser-1303 by DAPK1 enhances synaptic NMDA receptor channel activity. In terms of tissue distribution, primarily found in the fronto-parieto-temporal cortex and hippocampus pyramidal cells, lower expression in the basal ganglia.

It is found in the cell membrane. The protein localises to the postsynaptic cell membrane. It localises to the cell projection. The protein resides in the dendrite. Its subcellular location is the late endosome. It is found in the lysosome. The protein localises to the cytoplasm. It localises to the cytoskeleton. The enzyme catalyses Ca(2+)(in) = Ca(2+)(out). The catalysed reaction is Na(+)(in) = Na(+)(out). It catalyses the reaction K(+)(in) = K(+)(out). Functionally, component of N-methyl-D-aspartate (NMDA) receptors (NMDARs) that function as heterotetrameric, ligand-gated cation channels with high calcium permeability and voltage-dependent block by Mg(2+). Participates in synaptic plasticity for learning and memory formation by contributing to the long-term depression (LTD) of hippocampus membrane currents. Channel activation requires binding of the neurotransmitter L-glutamate to the GluN2 subunit, glycine or D-serine binding to the GluN1 subunit, plus membrane depolarization to eliminate channel inhibition by Mg(2+). NMDARs mediate simultaneously the potasium efflux and the influx of calcium and sodium. Each GluN2 subunit confers differential attributes to channel properties, including activation, deactivation and desensitization kinetics, pH sensitivity, Ca2(+) permeability, and binding to allosteric modulators. In concert with DAPK1 at extrasynaptic sites, acts as a central mediator for stroke damage. Its phosphorylation at Ser-1303 by DAPK1 enhances synaptic NMDA receptor channel activity inducing injurious Ca2+ influx through them, resulting in an irreversible neuronal death. The protein is Glutamate receptor ionotropic, NMDA 2B of Homo sapiens (Human).